The sequence spans 644 residues: Probable lysophospholipase 2 (644 aa).

Positions 1–19 are cleaved as a signal peptide; that stretch reads MYFQSFYFLALLLATAVYG. N-linked (GlcNAc...) asparagine glycosylation is found at asparagine 44, asparagine 96, asparagine 141, asparagine 178, asparagine 221, asparagine 245, asparagine 253, asparagine 281, asparagine 286, asparagine 316, asparagine 319, asparagine 373, asparagine 393, asparagine 449, asparagine 501, asparagine 558, asparagine 579, and asparagine 596. Residues 53–600 form the PLA2c domain; that stretch reads SCDSSEIMVN…SQYCWNGTVD (548 aa).

It belongs to the lysophospholipase family.

Its subcellular location is the secreted. The catalysed reaction is a 1-acyl-sn-glycero-3-phosphocholine + H2O = sn-glycerol 3-phosphocholine + a fatty acid + H(+). In terms of biological role, catalyzes the release of fatty acids from lysophospholipids. The sequence is that of Probable lysophospholipase 2 (plb2) from Schizosaccharomyces pombe (strain 972 / ATCC 24843) (Fission yeast).